A 598-amino-acid chain; its full sequence is NADH-quinone oxidoreductase subunit C/D (598 aa).

The tract at residues 1–189 is NADH dehydrogenase I subunit C; it reads MTDSTTHDRE…DPFELTRQKQ (189 aa). The segment at 213–598 is NADH dehydrogenase I subunit D; the sequence is DFMFLNLGPN…IDFVMSDVDR (386 aa).

This sequence in the N-terminal section; belongs to the complex I 30 kDa subunit family. The protein in the C-terminal section; belongs to the complex I 49 kDa subunit family. In terms of assembly, NDH-1 is composed of 13 different subunits. Subunits NuoB, CD, E, F, and G constitute the peripheral sector of the complex.

The protein resides in the cell inner membrane. The enzyme catalyses a quinone + NADH + 5 H(+)(in) = a quinol + NAD(+) + 4 H(+)(out). In terms of biological role, NDH-1 shuttles electrons from NADH, via FMN and iron-sulfur (Fe-S) centers, to quinones in the respiratory chain. The immediate electron acceptor for the enzyme in this species is believed to be ubiquinone. Couples the redox reaction to proton translocation (for every two electrons transferred, four hydrogen ions are translocated across the cytoplasmic membrane), and thus conserves the redox energy in a proton gradient. The protein is NADH-quinone oxidoreductase subunit C/D of Edwardsiella ictaluri (strain 93-146).